Here is a 776-residue protein sequence, read N- to C-terminus: Mitochondrial intermediate peptidase (776 aa).

The N-terminal 38 residues, 1 to 38 (MLNSARTVLARHSARQLYRFRGCLVHQQRHRHQVQRTL), are a transit peptide targeting the mitochondrion. H560 contributes to the Zn(2+) binding site. The active site involves E561. 2 residues coordinate Zn(2+): H564 and H567.

Belongs to the peptidase M3 family. The cofactor is Zn(2+).

It is found in the mitochondrion matrix. The enzyme catalyses Release of an N-terminal octapeptide as second stage of processing of some proteins imported into the mitochondrion.. In terms of biological role, cleaves proteins, imported into the mitochondrion, to their mature size. While most mitochondrial precursor proteins are processed to the mature form in one step by mitochondrial processing peptidase (MPP), the sequential cleavage by MIP of an octapeptide after initial processing by MPP is a required step for a subgroup of nuclear-encoded precursor proteins destined for the matrix or the inner membrane. This Coprinopsis cinerea (strain Okayama-7 / 130 / ATCC MYA-4618 / FGSC 9003) (Inky cap fungus) protein is Mitochondrial intermediate peptidase (OCT1).